A 175-amino-acid chain; its full sequence is uncharacterized protein (175 aa).

This is an uncharacterized protein from Escherichia coli.